The primary structure comprises 147 residues: Ribonuclease H (147 aa).

In terms of domain architecture, RNase H type-1 spans 3 to 145 (TEDRVEIYTD…ADQLANKGVE (143 aa)). Mg(2+)-binding residues include Asp-12, Glu-50, Asp-72, and Asp-137.

This sequence belongs to the RNase H family. In terms of assembly, monomer. Requires Mg(2+) as cofactor.

It is found in the cytoplasm. It carries out the reaction Endonucleolytic cleavage to 5'-phosphomonoester.. Its function is as follows. Endonuclease that specifically degrades the RNA of RNA-DNA hybrids. This is Ribonuclease H from Chromobacterium violaceum (strain ATCC 12472 / DSM 30191 / JCM 1249 / CCUG 213 / NBRC 12614 / NCIMB 9131 / NCTC 9757 / MK).